A 424-amino-acid chain; its full sequence is MTRFDSIERAVADIAAGKAVVVVDDEDRENEGDLIFAAEKATPELVAFMVRYTSGYLCVPLDGDDCDRLGLPPMYATNQDKHGTAYTVTVDAREGIGTGISASDRAATMRLLANPESGANDFTRPGHVVPLRAKEGGVLRRPGHTEAAVDLARMADLRPAGVICEIVSQKDEGAMAQTDELRVFADEHNLALISIADLIAWRRKHEKHVLRIAEARIPTRHGEFTAVGYTSIYDEVEHVALVRGDIAGPDGDGSDVLVRVHSECLTGDVFGSLRCDCGPQLDAALDMVAQEGRGVVLYMRGHEGRGIGLMHKLQAYQLQDAGSDTVDANLELGLPADARDYGIGAQILVDLGISSMRLLTNNPAKRVGLDGYGLQITDRVPMPLRANAENLTYLRTKRDRMGHDLIGLDEYEANQNTAQPGTAL.

The segment at 1–204 (MTRFDSIERA…IADLIAWRRK (204 aa)) is DHBP synthase. Residues 28–29 (RE), Asp-33, 141–145 (RPGHT), and Glu-165 contribute to the D-ribulose 5-phosphate site. Glu-29 contacts Mg(2+). Position 144 (His-144) interacts with Mg(2+). The interval 205–424 (HEKHVLRIAE…QNTAQPGTAL (220 aa)) is GTP cyclohydrolase II. A GTP-binding site is contributed by 259-263 (RVHSE). Zn(2+) is bound by residues Cys-264, Cys-275, and Cys-277. GTP contacts are provided by residues Gln-280, 303–305 (EGR), and Thr-325. Catalysis depends on Asp-337, which acts as the Proton acceptor; for GTP cyclohydrolase activity. Arg-339 acts as the Nucleophile; for GTP cyclohydrolase activity in catalysis. GTP is bound by residues Thr-360 and Lys-365.

This sequence in the N-terminal section; belongs to the DHBP synthase family. It in the C-terminal section; belongs to the GTP cyclohydrolase II family. Requires Mg(2+) as cofactor. Mn(2+) is required as a cofactor. It depends on Zn(2+) as a cofactor.

It carries out the reaction D-ribulose 5-phosphate = (2S)-2-hydroxy-3-oxobutyl phosphate + formate + H(+). The enzyme catalyses GTP + 4 H2O = 2,5-diamino-6-hydroxy-4-(5-phosphoribosylamino)-pyrimidine + formate + 2 phosphate + 3 H(+). The protein operates within cofactor biosynthesis; riboflavin biosynthesis; 2-hydroxy-3-oxobutyl phosphate from D-ribulose 5-phosphate: step 1/1. It functions in the pathway cofactor biosynthesis; riboflavin biosynthesis; 5-amino-6-(D-ribitylamino)uracil from GTP: step 1/4. Catalyzes the conversion of D-ribulose 5-phosphate to formate and 3,4-dihydroxy-2-butanone 4-phosphate. Functionally, catalyzes the conversion of GTP to 2,5-diamino-6-ribosylamino-4(3H)-pyrimidinone 5'-phosphate (DARP), formate and pyrophosphate. In Rhodococcus erythropolis (strain PR4 / NBRC 100887), this protein is Riboflavin biosynthesis protein RibBA.